The primary structure comprises 156 residues: UPF0039 protein Mb2876c (156 aa).

One can recognise an N-acetyltransferase domain in the interval 8-150 (VWAKDLDARA…PHVPMLRPGS (143 aa)).

This sequence belongs to the UPF0039 (ElaA) family.

In Mycobacterium bovis (strain ATCC BAA-935 / AF2122/97), this protein is UPF0039 protein Mb2876c.